Consider the following 441-residue polypeptide: Chromosomal replication initiator protein DnaA (441 aa).

A domain I, interacts with DnaA modulators region spans residues 1-71; the sequence is MDIRWEEILE…AVYQVVGDRF (71 aa). Positions 71 to 99 are domain II; the sequence is FKVSILTESETSSHVLKEVIQSKFDDSDS. A domain III, AAA+ region region spans residues 100 to 318; sequence DLNPEYIFSN…GIVNDLVMYK (219 aa). 4 residues coordinate ATP: Gly143, Gly145, Lys146, and Thr147. Residues 319–441 are domain IV, binds dsDNA; the sequence is KAYEYFLLTE…HTIKHKISFQ (123 aa).

Belongs to the DnaA family. As to quaternary structure, oligomerizes as a right-handed, spiral filament on DNA at oriC.

Its subcellular location is the cytoplasm. Its function is as follows. Plays an essential role in the initiation and regulation of chromosomal replication. ATP-DnaA binds to the origin of replication (oriC) to initiate formation of the DNA replication initiation complex once per cell cycle. Binds the DnaA box (a 9 base pair repeat at the origin) and separates the double-stranded (ds)DNA. Forms a right-handed helical filament on oriC DNA; dsDNA binds to the exterior of the filament while single-stranded (ss)DNA is stabiized in the filament's interior. The ATP-DnaA-oriC complex binds and stabilizes one strand of the AT-rich DNA unwinding element (DUE), permitting loading of DNA polymerase. After initiation quickly degrades to an ADP-DnaA complex that is not apt for DNA replication. Binds acidic phospholipids. The sequence is that of Chromosomal replication initiator protein DnaA from Leptospira biflexa serovar Patoc (strain Patoc 1 / Ames).